Consider the following 827-residue polypeptide: Centrosomal protein of 95 kDa (827 aa).

Disordered regions lie at residues 115 to 145 (ISES…ERTE), 183 to 249 (GDTA…MVPS), 308 to 372 (FLTS…MSEK), 388 to 476 (LGDR…DSCH), and 489 to 558 (ELRK…KASP). Residues 123-145 (SETEQYSKDSHGEEAGEDLERTE) are compositionally biased toward basic and acidic residues. Residues 187 to 199 (HTFSQRSNGAQNS) show a composition bias toward polar residues. Basic and acidic residues-rich tracts occupy residues 327–343 (EATR…DENR) and 360–372 (PLTE…MSEK). Phosphoserine is present on residues Ser447, Ser449, and Ser451. Coiled-coil stretches lie at residues 584–633 (LTKM…VKKE) and 701–795 (LQIQ…DDDA).

Its subcellular location is the cytoplasm. It is found in the cytoskeleton. The protein resides in the microtubule organizing center. The protein localises to the centrosome. It localises to the spindle pole. The sequence is that of Centrosomal protein of 95 kDa (Cep95) from Mus musculus (Mouse).